The primary structure comprises 108 residues: UPF0060 membrane protein Nwi_1459 (108 aa).

Transmembrane regions (helical) follow at residues 5-25 (AAYVGAAIAEIAGCFAFWAWL), 31-51 (VWWLVPGMASLALFAYLLTLV), 61-81 (AAYGGIYIMASLGWLWSVEGI), and 88-108 (LAGALICLIGAVVILIGPHEI).

This sequence belongs to the UPF0060 family.

The protein resides in the cell inner membrane. This is UPF0060 membrane protein Nwi_1459 from Nitrobacter winogradskyi (strain ATCC 25391 / DSM 10237 / CIP 104748 / NCIMB 11846 / Nb-255).